Here is a 111-residue protein sequence, read N- to C-terminus: UPF0342 protein gbs1446 (111 aa).

It belongs to the UPF0342 family.

In Streptococcus agalactiae serotype III (strain NEM316), this protein is UPF0342 protein gbs1446.